Here is a 289-residue protein sequence, read N- to C-terminus: MNWISNVVPPKIRSFLRRDTPENLWIKCPESGELVFHKDLEANLFVIPGSGYHMYIAPKPRLDALFDEGVYETIPTPEVPLDPLKFRDVKRYTDRIKEYRQKTGAPDAVKLAYGKLQGLDAVVAVQDFAFLGGSLGMAAGEAVITGMQQALERQAPFIIFTASGGARMQEGMFSLMQMPRTTLMVQALREARLPYIVVLTHPTTGGVSASYAMLGDIQVAEPGAVIGFAGARVIEQTIHEHLPEGFQRAEYLQAHGMVDMVVRRHDLPAVLARLCAFLTNSPRRAPIPA.

The region spanning 24–289 (LWIKCPESGE…NSPRRAPIPA (266 aa)) is the CoA carboxyltransferase N-terminal domain.

It belongs to the AccD/PCCB family. As to quaternary structure, acetyl-CoA carboxylase is a heterohexamer composed of biotin carboxyl carrier protein (AccB), biotin carboxylase (AccC) and two subunits each of ACCase subunit alpha (AccA) and ACCase subunit beta (AccD).

It is found in the cytoplasm. The enzyme catalyses N(6)-carboxybiotinyl-L-lysyl-[protein] + acetyl-CoA = N(6)-biotinyl-L-lysyl-[protein] + malonyl-CoA. It functions in the pathway lipid metabolism; malonyl-CoA biosynthesis; malonyl-CoA from acetyl-CoA: step 1/1. In terms of biological role, component of the acetyl coenzyme A carboxylase (ACC) complex. Biotin carboxylase (BC) catalyzes the carboxylation of biotin on its carrier protein (BCCP) and then the CO(2) group is transferred by the transcarboxylase to acetyl-CoA to form malonyl-CoA. This is Acetyl-coenzyme A carboxylase carboxyl transferase subunit beta from Beijerinckia indica subsp. indica (strain ATCC 9039 / DSM 1715 / NCIMB 8712).